The primary structure comprises 444 residues: tRNA-2-methylthio-N(6)-dimethylallyladenosine synthase (444 aa).

One can recognise an MTTase N-terminal domain in the interval Lys7–Arg121. Residues Cys16, Cys52, Cys84, Cys158, Cys162, and Cys165 each contribute to the [4Fe-4S] cluster site. Positions Gly144 to Ala376 constitute a Radical SAM core domain. Residues Glu379–Met441 form the TRAM domain.

It belongs to the methylthiotransferase family. MiaB subfamily. Monomer. The cofactor is [4Fe-4S] cluster.

It localises to the cytoplasm. It carries out the reaction N(6)-dimethylallyladenosine(37) in tRNA + (sulfur carrier)-SH + AH2 + 2 S-adenosyl-L-methionine = 2-methylsulfanyl-N(6)-dimethylallyladenosine(37) in tRNA + (sulfur carrier)-H + 5'-deoxyadenosine + L-methionine + A + S-adenosyl-L-homocysteine + 2 H(+). Its function is as follows. Catalyzes the methylthiolation of N6-(dimethylallyl)adenosine (i(6)A), leading to the formation of 2-methylthio-N6-(dimethylallyl)adenosine (ms(2)i(6)A) at position 37 in tRNAs that read codons beginning with uridine. This Sphingopyxis alaskensis (strain DSM 13593 / LMG 18877 / RB2256) (Sphingomonas alaskensis) protein is tRNA-2-methylthio-N(6)-dimethylallyladenosine synthase.